Consider the following 482-residue polypeptide: Kynurenine 3-monooxygenase (482 aa).

Belongs to the aromatic-ring hydroxylase family. KMO subfamily. FAD serves as cofactor.

The protein localises to the mitochondrion outer membrane. The enzyme catalyses L-kynurenine + NADPH + O2 + H(+) = 3-hydroxy-L-kynurenine + NADP(+) + H2O. It participates in cofactor biosynthesis; NAD(+) biosynthesis; quinolinate from L-kynurenine: step 1/3. Catalyzes the hydroxylation of L-kynurenine (L-Kyn) to form 3-hydroxy-L-kynurenine (L-3OHKyn). Required for synthesis of quinolinic acid. The sequence is that of Kynurenine 3-monooxygenase from Phaeosphaeria nodorum (strain SN15 / ATCC MYA-4574 / FGSC 10173) (Glume blotch fungus).